Here is a 227-residue protein sequence, read N- to C-terminus: MSKNIRINEIPSGERPREKLLFYGAQFLSNEELLAIILRTGNKDSNVVELSYRIIHSVGGLNGLFKASAKELMEVKGVKEAKATQILAMCELYKRFKVSELTQVKISKPSDVAKLVLDELRMLRQEVLILINLDTKNKVISKKEIFKGGLNSSLVHPREIFREAVKDSAASIIICHNHPSGDPTPSRDDINITTRLKECGKMMGIELLDHLIIGDNRFISLKEKDIL.

Positions 105 to 227 constitute an MPN domain; sequence KISKPSDVAK…FISLKEKDIL (123 aa). Residues H176, H178, and D189 each coordinate Zn(2+). The JAMM motif signature appears at 176-189; the sequence is HNHPSGDPTPSRDD.

It belongs to the UPF0758 family.

The protein is UPF0758 protein CPE2144 of Clostridium perfringens (strain 13 / Type A).